A 754-amino-acid chain; its full sequence is tRNA 5-methylaminomethyl-2-thiouridine biosynthesis bifunctional protein MnmC (754 aa).

Positions 1–320 (MPSCYEHSAQ…RRQAVNNSDS (320 aa)) are tRNA (mnm(5)s(2)U34)-methyltransferase. Positions 324-754 (IGGGIAGACL…RKLLKGKALC (431 aa)) are FAD-dependent cmnm(5)s(2)U34 oxidoreductase.

In the N-terminal section; belongs to the methyltransferase superfamily. tRNA (mnm(5)s(2)U34)-methyltransferase family. It in the C-terminal section; belongs to the DAO family. It depends on FAD as a cofactor.

The protein localises to the cytoplasm. The enzyme catalyses 5-aminomethyl-2-thiouridine(34) in tRNA + S-adenosyl-L-methionine = 5-methylaminomethyl-2-thiouridine(34) in tRNA + S-adenosyl-L-homocysteine + H(+). In terms of biological role, catalyzes the last two steps in the biosynthesis of 5-methylaminomethyl-2-thiouridine (mnm(5)s(2)U) at the wobble position (U34) in tRNA. Catalyzes the FAD-dependent demodification of cmnm(5)s(2)U34 to nm(5)s(2)U34, followed by the transfer of a methyl group from S-adenosyl-L-methionine to nm(5)s(2)U34, to form mnm(5)s(2)U34. The sequence is that of tRNA 5-methylaminomethyl-2-thiouridine biosynthesis bifunctional protein MnmC from Shewanella denitrificans (strain OS217 / ATCC BAA-1090 / DSM 15013).